A 137-amino-acid polypeptide reads, in one-letter code: Structural protein A137R (137 aa).

This sequence belongs to the asfivirus A137R family. As to quaternary structure, interacts with host TBK1.

It is found in the virion. It localises to the host cytoplasm. Plays a role in the inhibition of the host innate immune response. Mechanistically, promotes the autophagy-mediated lysosomal degradation of host TBK1 and affects IRF3 nuclear translocation to block type I IFN production. The polypeptide is Structural protein A137R (African swine fever virus (isolate Warthog/Namibia/Wart80/1980) (ASFV)).